A 277-amino-acid chain; its full sequence is Thymidylate synthase (277 aa).

Arg-21 serves as a coordination point for dUMP. His-51 contacts (6R)-5,10-methylene-5,6,7,8-tetrahydrofolate. 139–140 (RR) is a binding site for dUMP. The active-site Nucleophile is Cys-159. Residues 179-182 (RSAD), Asn-190, and 220-222 (HIY) contribute to the dUMP site. Position 182 (Asp-182) interacts with (6R)-5,10-methylene-5,6,7,8-tetrahydrofolate. Ala-276 provides a ligand contact to (6R)-5,10-methylene-5,6,7,8-tetrahydrofolate.

Belongs to the thymidylate synthase family. Bacterial-type ThyA subfamily. As to quaternary structure, homodimer.

The protein resides in the cytoplasm. The enzyme catalyses dUMP + (6R)-5,10-methylene-5,6,7,8-tetrahydrofolate = 7,8-dihydrofolate + dTMP. Its pathway is pyrimidine metabolism; dTTP biosynthesis. Functionally, catalyzes the reductive methylation of 2'-deoxyuridine-5'-monophosphate (dUMP) to 2'-deoxythymidine-5'-monophosphate (dTMP) while utilizing 5,10-methylenetetrahydrofolate (mTHF) as the methyl donor and reductant in the reaction, yielding dihydrofolate (DHF) as a by-product. This enzymatic reaction provides an intracellular de novo source of dTMP, an essential precursor for DNA biosynthesis. The chain is Thymidylate synthase from Ruegeria sp. (strain TM1040) (Silicibacter sp.).